The chain runs to 237 residues: Ribose-5-phosphate isomerase A (237 aa).

Residues 30 to 33 (SGST), 87 to 90 (DGAD), and 100 to 103 (KGGG) each bind substrate. Glutamate 109 serves as the catalytic Proton acceptor. Lysine 127 provides a ligand contact to substrate.

Belongs to the ribose 5-phosphate isomerase family. Homodimer.

The enzyme catalyses aldehydo-D-ribose 5-phosphate = D-ribulose 5-phosphate. Its pathway is carbohydrate degradation; pentose phosphate pathway; D-ribose 5-phosphate from D-ribulose 5-phosphate (non-oxidative stage): step 1/1. Its function is as follows. Catalyzes the reversible conversion of ribose-5-phosphate to ribulose 5-phosphate. The chain is Ribose-5-phosphate isomerase A from Prochlorococcus marinus (strain SARG / CCMP1375 / SS120).